The sequence spans 488 residues: Ribulose bisphosphate carboxylase large chain 1 (488 aa).

Substrate is bound by residues N128 and T178. K180 (proton acceptor) is an active-site residue. K182 lines the substrate pocket. The Mg(2+) site is built by K206, D208, and E209. N6-carboxylysine is present on K206. H298 serves as the catalytic Proton acceptor. The substrate site is built by R299, H331, and S383.

The protein belongs to the RuBisCO large chain family. Type I subfamily. In terms of assembly, heterohexadecamer of 8 large chains and 8 small chains. Requires Mg(2+) as cofactor.

The enzyme catalyses 2 (2R)-3-phosphoglycerate + 2 H(+) = D-ribulose 1,5-bisphosphate + CO2 + H2O. It catalyses the reaction D-ribulose 1,5-bisphosphate + O2 = 2-phosphoglycolate + (2R)-3-phosphoglycerate + 2 H(+). Its function is as follows. RuBisCO catalyzes two reactions: the carboxylation of D-ribulose 1,5-bisphosphate, the primary event in carbon dioxide fixation, as well as the oxidative fragmentation of the pentose substrate. Both reactions occur simultaneously and in competition at the same active site. The polypeptide is Ribulose bisphosphate carboxylase large chain 1 (Methylibium petroleiphilum (strain ATCC BAA-1232 / LMG 22953 / PM1)).